The chain runs to 185 residues: Ribosome-recycling factor (185 aa).

This sequence belongs to the RRF family.

The protein localises to the cytoplasm. In terms of biological role, responsible for the release of ribosomes from messenger RNA at the termination of protein biosynthesis. May increase the efficiency of translation by recycling ribosomes from one round of translation to another. The chain is Ribosome-recycling factor from Ectopseudomonas mendocina (strain ymp) (Pseudomonas mendocina).